Here is a 207-residue protein sequence, read N- to C-terminus: uncharacterized protein (207 aa).

This is an uncharacterized protein from Rhizobium meliloti (Ensifer meliloti).